The primary structure comprises 76 residues: ATP synthase subunit 9, mitochondrial (76 aa).

Methionine 1 is subject to N-formylmethionine. The next 2 membrane-spanning stretches (helical) occupy residues 14 to 34 (ISTI…AALI) and 52 to 72 (ILGF…SFLL).

It belongs to the ATPase C chain family. In terms of assembly, F-type ATPases have 2 components, CF(1) - the catalytic core - and CF(0) - the membrane proton channel. In yeast, the dimeric form of ATP synthase consists of 18 polypeptides: alpha, beta, gamma, delta, epsilon, 4 (B), 5 (OSCP), 6 (A), 8, 9 (C), d, E (Tim11), f, g, h, i, j and k.

The protein resides in the mitochondrion membrane. Mitochondrial membrane ATP synthase (F(1)F(0) ATP synthase or Complex V) produces ATP from ADP in the presence of a proton gradient across the membrane which is generated by electron transport complexes of the respiratory chain. F-type ATPases consist of two structural domains, F(1) - containing the extramembraneous catalytic core and F(0) - containing the membrane proton channel, linked together by a central stalk and a peripheral stalk. During catalysis, ATP synthesis in the catalytic domain of F(1) is coupled via a rotary mechanism of the central stalk subunits to proton translocation. Part of the complex F(0) domain. A homomeric c-ring of probably 10 subunits is part of the complex rotary element. The polypeptide is ATP synthase subunit 9, mitochondrial (ATP9) (Saccharomyces paradoxus (Yeast)).